The sequence spans 88 residues: Small ribosomal subunit protein bS16 (88 aa).

The protein belongs to the bacterial ribosomal protein bS16 family.

The sequence is that of Small ribosomal subunit protein bS16 from Leptospira borgpetersenii serovar Hardjo-bovis (strain L550).